We begin with the raw amino-acid sequence, 344 residues long: MLRVAIAGASGYTGFELVRLLDRHPHAELKMITSRVHRGQRLDKVYPALRKHCDLVFEEPDPERLAAEADLVFTALPHRAAMDMIPDLLKGGAKVVDLSADYRFLDAAVYEAWYEPHKTPELLKEAVYGLPELHREEIRNARLVGNPGCYPTSVILAAAPLVAGKLADPRTLIADSKSGVSGAGRGVSLTVHFCEVNDGFKAYKVGEHRHTPEIEQELSRLAGEKLAVTFTPHLVPMSRGILSTVYATVIQGVTPEDISAAYESFYRNARFVRLCRAEMPTTLQVRGSNYCDIGWRLDSRTGRAVLIAVIDNLTRGASGQAICNMNIMCGFPEDCGLQDAPWQP.

Cysteine 149 is an active-site residue.

The protein belongs to the NAGSA dehydrogenase family. Type 1 subfamily.

It is found in the cytoplasm. It catalyses the reaction N-acetyl-L-glutamate 5-semialdehyde + phosphate + NADP(+) = N-acetyl-L-glutamyl 5-phosphate + NADPH + H(+). Its pathway is amino-acid biosynthesis; L-arginine biosynthesis; N(2)-acetyl-L-ornithine from L-glutamate: step 3/4. In terms of biological role, catalyzes the NADPH-dependent reduction of N-acetyl-5-glutamyl phosphate to yield N-acetyl-L-glutamate 5-semialdehyde. The polypeptide is N-acetyl-gamma-glutamyl-phosphate reductase (Syntrophobacter fumaroxidans (strain DSM 10017 / MPOB)).